A 157-amino-acid polypeptide reads, in one-letter code: Transcription elongation factor GreA (157 aa).

It belongs to the GreA/GreB family.

In terms of biological role, necessary for efficient RNA polymerase transcription elongation past template-encoded arresting sites. The arresting sites in DNA have the property of trapping a certain fraction of elongating RNA polymerases that pass through, resulting in locked ternary complexes. Cleavage of the nascent transcript by cleavage factors such as GreA or GreB allows the resumption of elongation from the new 3'terminus. GreA releases sequences of 2 to 3 nucleotides. The polypeptide is Transcription elongation factor GreA (Bartonella henselae (strain ATCC 49882 / DSM 28221 / CCUG 30454 / Houston 1) (Rochalimaea henselae)).